The sequence spans 291 residues: 3-hydroxy-5-phosphonooxypentane-2,4-dione thiolase (291 aa).

The Schiff-base intermediate with substrate role is filled by K203.

The protein belongs to the DeoC/FbaB aldolase family. As to quaternary structure, homodecamer.

The protein resides in the cytoplasm. The enzyme catalyses dihydroxyacetone phosphate + acetyl-CoA = 3-hydroxy-2,4-dioxopentyl phosphate + CoA. In terms of biological role, involved in the degradation of phospho-AI-2, thereby terminating induction of the lsr operon and closing the AI-2 signaling cycle. Catalyzes the transfer of an acetyl moiety from 3-hydroxy-5-phosphonooxypentane-2,4-dione to CoA to form glycerone phosphate and acetyl-CoA. This is 3-hydroxy-5-phosphonooxypentane-2,4-dione thiolase from Escherichia coli O139:H28 (strain E24377A / ETEC).